The sequence spans 278 residues: uncharacterized protein (278 aa).

An N-terminal signal peptide occupies residues Met1–Ala20. Gly96 carries GPI-anchor amidated glycine lipidation. The propeptide at Thr97–Ser278 is removed in mature form.

The protein resides in the cell membrane. This is an uncharacterized protein from Schizosaccharomyces pombe (strain 972 / ATCC 24843) (Fission yeast).